Here is a 262-residue protein sequence, read N- to C-terminus: Zinc import ATP-binding protein ZnuC (262 aa).

Positions 4 to 220 constitute an ABC transporter domain; it reads LNLSGVRLSH…PEYLALFGPR (217 aa). An ATP-binding site is contributed by 36–43; the sequence is GPNGAGKS. A disordered region spans residues 238-262; that stretch reads ADGSVLPLAEGGGEPHTHGPGCRHG.

It belongs to the ABC transporter superfamily. Zinc importer (TC 3.A.1.15.5) family. In terms of assembly, the complex is composed of two ATP-binding proteins (ZnuC), two transmembrane proteins (ZnuB) and a solute-binding protein (ZnuA).

The protein localises to the cell inner membrane. The enzyme catalyses Zn(2+)(out) + ATP(in) + H2O(in) = Zn(2+)(in) + ADP(in) + phosphate(in) + H(+)(in). In terms of biological role, part of the ABC transporter complex ZnuABC involved in zinc import. Responsible for energy coupling to the transport system. The protein is Zinc import ATP-binding protein ZnuC of Paramagnetospirillum magneticum (strain ATCC 700264 / AMB-1) (Magnetospirillum magneticum).